The following is a 461-amino-acid chain: MFKLKLLSISTIFILAGCVSLAPEYQRPPAPVPQQFSLSKNSLTPAVNSYQDTGWRNFFVDPQVSRLIGEALNNNRDLRMAALKVEEARAQFNVTDADRYPQLNASSGITYNGGLKGDKPTTQEYDAGLELSYELDFFGKLKNMSEADRQNYFASEEARRAVHILLVSNVSQSYFSQQLAYEQLRIARETLKNYEQSYAFVEQQLVTGSTNVLALEQARGQIESTRAEIAKREGDLAQANNALQLVLGTYRAVPSEKGIKGGEIAPVKLPPNLSSQILLQRPDIMEAEYQLKAADANIGAARAAFFPSITLTSGLSSSSTELSSLFTSGSGMWNFIPKIEIPIFNAGRNKANLKLAEIRQQQSVVNYEQKIQSAFKDVSDTLALRDSLSQQLESQQRYLDSLQITLQRARGLYASGAVSYIEVLDAERSLFATQQTILDLTYSRQVNEINLFTALGGGWVE.

The first 17 residues, 1–17 (MFKLKLLSISTIFILAG), serve as a signal peptide directing secretion. Cysteine 18 carries N-palmitoyl cysteine lipidation. The S-diacylglycerol cysteine moiety is linked to residue cysteine 18.

This sequence belongs to the outer membrane factor (OMF) (TC 1.B.17) family.

It localises to the cell outer membrane. Component of the sil cation-efflux system that confers resistance to silver. May be part of a three-component cation/proton antiporter. This Salmonella typhimurium protein is Probable outer membrane lipoprotein SilC (silC).